Here is a 737-residue protein sequence, read N- to C-terminus: Exostosin-1c (737 aa).

The Cytoplasmic segment spans residues 1–6 (MQARKK). A helical; Signal-anchor for type II membrane protein transmembrane segment spans residues 7–27 (YVLLGLCTCCWILLYYWAGLQ). Topologically, residues 28–737 (ERLLGLITHR…RKRYKDLERV (710 aa)) are lumenal. N-linked (GlcNAc...) asparagine glycans are attached at residues Asn-194 and Asn-322. Residues Arg-432, Arg-540, Asp-556, Glu-557, Asp-558, Glu-644, Asp-645, and Arg-692 each contribute to the UDP-N-acetyl-alpha-D-glucosamine site. Residue Asp-558 coordinates Mn(2+). Cys-643 and Cys-695 form a disulfide bridge. Asp-645 is a catalytic residue.

It belongs to the glycosyltransferase 47 family. It depends on Mn(2+) as a cofactor.

It localises to the endoplasmic reticulum membrane. It carries out the reaction 3-O-{[(1-&gt;4)-beta-D-GlcA-(1-&gt;4)-alpha-D-GlcNAc](n)-(1-&gt;4)-beta-D-GlcA-(1-&gt;3)-beta-D-Gal-(1-&gt;3)-beta-D-Gal-(1-&gt;4)-beta-D-Xyl}-L-seryl-[protein] + UDP-N-acetyl-alpha-D-glucosamine = 3-O-{alpha-D-GlcNAc-[(1-&gt;4)-beta-D-GlcA-(1-&gt;4)-alpha-D-GlcNAc](n)-(1-&gt;4)-beta-D-GlcA-(1-&gt;3)-beta-D-Gal-(1-&gt;3)-beta-D-Gal-(1-&gt;4)-beta-D-Xyl}-L-seryl-[protein] + UDP + H(+). The enzyme catalyses 3-O-{alpha-D-GlcNAc-[(1-&gt;4)-beta-D-GlcA-(1-&gt;4)-alpha-D-GlcNAc](n)-(1-&gt;4)-beta-D-GlcA-(1-&gt;3)-beta-D-Gal-(1-&gt;3)-beta-D-Gal-(1-&gt;4)-beta-D-Xyl}-L-seryl-[protein] + UDP-alpha-D-glucuronate = 3-O-{[(1-&gt;4)-beta-D-GlcA-(1-&gt;4)-alpha-D-GlcNAc](n+1)-(1-&gt;4)-beta-D-GlcA-(1-&gt;3)-beta-D-Gal-(1-&gt;3)-beta-D-Gal-(1-&gt;4)-beta-D-Xyl}-L-seryl-[protein] + UDP + H(+). Its pathway is protein modification; protein glycosylation. Glycosyltransferase required for the biosynthesis of heparan-sulfate. This chain is Exostosin-1c (ext1c), found in Danio rerio (Zebrafish).